The sequence spans 160 residues: SsrA-binding protein (160 aa).

The protein belongs to the SmpB family.

The protein localises to the cytoplasm. Functionally, required for rescue of stalled ribosomes mediated by trans-translation. Binds to transfer-messenger RNA (tmRNA), required for stable association of tmRNA with ribosomes. tmRNA and SmpB together mimic tRNA shape, replacing the anticodon stem-loop with SmpB. tmRNA is encoded by the ssrA gene; the 2 termini fold to resemble tRNA(Ala) and it encodes a 'tag peptide', a short internal open reading frame. During trans-translation Ala-aminoacylated tmRNA acts like a tRNA, entering the A-site of stalled ribosomes, displacing the stalled mRNA. The ribosome then switches to translate the ORF on the tmRNA; the nascent peptide is terminated with the 'tag peptide' encoded by the tmRNA and targeted for degradation. The ribosome is freed to recommence translation, which seems to be the essential function of trans-translation. This Nocardia farcinica (strain IFM 10152) protein is SsrA-binding protein.